Here is a 297-residue protein sequence, read N- to C-terminus: Protein CANDIDATE G-PROTEIN COUPLED RECEPTOR 8 (297 aa).

Asn20 carries an N-linked (GlcNAc...) asparagine glycan. The next 7 membrane-spanning stretches (helical) occupy residues 34-54 (GFLH…YLAY), 70-90 (IMIA…AWCC), 107-127 (LTLF…AFLF), 142-162 (FLIS…FLFG), 180-200 (WGLW…VFLM), 215-235 (FYNY…ASAF), and 242-262 (FGFW…LPLL).

The protein belongs to the UPF0359 family.

It is found in the membrane. Its function is as follows. G-protein coupled receptor. Plays a role in plants and microbes interactions. This Arabidopsis thaliana (Mouse-ear cress) protein is Protein CANDIDATE G-PROTEIN COUPLED RECEPTOR 8.